A 350-amino-acid polypeptide reads, in one-letter code: Ferredoxin--NADP reductase (350 aa).

FAD contacts are provided by T22, E41, Q49, Y54, V94, F129, D295, and S336.

It belongs to the ferredoxin--NADP reductase type 2 family. Homodimer. The cofactor is FAD.

It carries out the reaction 2 reduced [2Fe-2S]-[ferredoxin] + NADP(+) + H(+) = 2 oxidized [2Fe-2S]-[ferredoxin] + NADPH. This is Ferredoxin--NADP reductase from Chlorobium luteolum (strain DSM 273 / BCRC 81028 / 2530) (Pelodictyon luteolum).